The chain runs to 126 residues: Aspartate 1-decarboxylase (126 aa).

Serine 25 functions as the Schiff-base intermediate with substrate; via pyruvic acid in the catalytic mechanism. Serine 25 carries the pyruvic acid (Ser) modification. Threonine 57 serves as a coordination point for substrate. The active-site Proton donor is tyrosine 58. Position 73–75 (73–75) interacts with substrate; sequence GGA.

The protein belongs to the PanD family. As to quaternary structure, heterooctamer of four alpha and four beta subunits. Pyruvate is required as a cofactor. In terms of processing, is synthesized initially as an inactive proenzyme, which is activated by self-cleavage at a specific serine bond to produce a beta-subunit with a hydroxyl group at its C-terminus and an alpha-subunit with a pyruvoyl group at its N-terminus.

The protein localises to the cytoplasm. It catalyses the reaction L-aspartate + H(+) = beta-alanine + CO2. It functions in the pathway cofactor biosynthesis; (R)-pantothenate biosynthesis; beta-alanine from L-aspartate: step 1/1. Catalyzes the pyruvoyl-dependent decarboxylation of aspartate to produce beta-alanine. This chain is Aspartate 1-decarboxylase, found in Xylella fastidiosa (strain M12).